Here is a 446-residue protein sequence, read N- to C-terminus: tRNA-2-methylthio-N(6)-dimethylallyladenosine synthase (446 aa).

In terms of domain architecture, MTTase N-terminal spans 3–119 (KKIFIKTFGC…INEAILNHLK (117 aa)). 6 residues coordinate [4Fe-4S] cluster: Cys12, Cys48, Cys82, Cys158, Cys162, and Cys165. The Radical SAM core domain occupies 144–374 (KDSKVSSFLT…QEKLFNNQIK (231 aa)). The region spanning 377–439 (KSLENKILNV…QNSLFGKLTE (63 aa)) is the TRAM domain.

The protein belongs to the methylthiotransferase family. MiaB subfamily. In terms of assembly, monomer. Requires [4Fe-4S] cluster as cofactor.

Its subcellular location is the cytoplasm. The catalysed reaction is N(6)-dimethylallyladenosine(37) in tRNA + (sulfur carrier)-SH + AH2 + 2 S-adenosyl-L-methionine = 2-methylsulfanyl-N(6)-dimethylallyladenosine(37) in tRNA + (sulfur carrier)-H + 5'-deoxyadenosine + L-methionine + A + S-adenosyl-L-homocysteine + 2 H(+). Functionally, catalyzes the methylthiolation of N6-(dimethylallyl)adenosine (i(6)A), leading to the formation of 2-methylthio-N6-(dimethylallyl)adenosine (ms(2)i(6)A) at position 37 in tRNAs that read codons beginning with uridine. In Pelagibacter ubique (strain HTCC1062), this protein is tRNA-2-methylthio-N(6)-dimethylallyladenosine synthase.